We begin with the raw amino-acid sequence, 347 residues long: NADH-ubiquinone oxidoreductase chain 2 (347 aa).

9 helical membrane passes run 3 to 23 (PPIF…VLIS), 25 to 45 (HWLL…PILM), 59 to 79 (YFLT…INLL), 111 to 131 (FHFW…MILL), 149 to 169 (INPN…GWGG), 200 to 220 (LMHL…MLFM), 242 to 262 (LLIL…GFIP), 274 to 294 (NMII…YFYM), and 325 to 345 (LLPP…MMLI).

The protein belongs to the complex I subunit 2 family. Core subunit of respiratory chain NADH dehydrogenase (Complex I) which is composed of 45 different subunits. Interacts with TMEM242.

Its subcellular location is the mitochondrion inner membrane. The catalysed reaction is a ubiquinone + NADH + 5 H(+)(in) = a ubiquinol + NAD(+) + 4 H(+)(out). Its function is as follows. Core subunit of the mitochondrial membrane respiratory chain NADH dehydrogenase (Complex I) which catalyzes electron transfer from NADH through the respiratory chain, using ubiquinone as an electron acceptor. Essential for the catalytic activity and assembly of complex I. This Ailurus fulgens (Himalayan red panda) protein is NADH-ubiquinone oxidoreductase chain 2.